Reading from the N-terminus, the 401-residue chain is Argininosuccinate synthase (401 aa).

ATP is bound by residues A7–S15 and A34. L-citrulline contacts are provided by Y85 and S90. Residue G115 coordinates ATP. T117, N121, and D122 together coordinate L-aspartate. Position 121 (N121) interacts with L-citrulline. L-citrulline is bound by residues R125, S174, S183, E259, and Y271.

This sequence belongs to the argininosuccinate synthase family. Type 1 subfamily. Homotetramer.

It is found in the cytoplasm. It carries out the reaction L-citrulline + L-aspartate + ATP = 2-(N(omega)-L-arginino)succinate + AMP + diphosphate + H(+). It participates in amino-acid biosynthesis; L-arginine biosynthesis; L-arginine from L-ornithine and carbamoyl phosphate: step 2/3. The chain is Argininosuccinate synthase from Desulforamulus reducens (strain ATCC BAA-1160 / DSM 100696 / MI-1) (Desulfotomaculum reducens).